Reading from the N-terminus, the 89-residue chain is Small ribosomal subunit protein uS19 (89 aa).

The protein belongs to the universal ribosomal protein uS19 family.

Functionally, protein S19 forms a complex with S13 that binds strongly to the 16S ribosomal RNA. The chain is Small ribosomal subunit protein uS19 from Ruthia magnifica subsp. Calyptogena magnifica.